Here is a 376-residue protein sequence, read N- to C-terminus: MYNLRMAESVTEGHPDKIADQLADALLDEFIKKDPYSKVSLEIMVTTGLVMVGGELTTESYVDIPRVVRSVIKDIGYTRPELGFDADTCAVVQSIDEQSPEIALGISSEGAGDTAIVVGYATKEAPNLMPWPITIAHKITKRISEYRKIGKFPFLRPDGKVLVAMIYEDGKPSYVQSIVAYVHHDPDVSINHLRELIIEEIIKKEIPEEFLTEKTSIKVNPTGRFVIGGPVADTGLTGRKIVSDAYGDIGLSGGSAFSGKDPTKTDRSGSYLARMIAKHVVAGGWAERCLVQIGYAFGLTEPVAFDIETFGTEKISKEILEDAVKKVFPLRPAEIIEFLDLRKPIYRQTSVYGHFGKENLPWEKLTKLEELKELLD.

His14 is an ATP binding site. Asp16 provides a ligand contact to Mg(2+). Glu42 contacts K(+). Positions 55 and 98 each coordinate L-methionine. The segment at 98–108 (QSPEIALGISS) is flexible loop. Residues 158–160 (DGK), 224–225 (RF), Asp233, 239–240 (RK), Ala256, and Lys260 contribute to the ATP site. Position 233 (Asp233) interacts with L-methionine. Lys264 serves as a coordination point for L-methionine.

This sequence belongs to the AdoMet synthase family. In terms of assembly, homotetramer; dimer of dimers. Requires Mg(2+) as cofactor. The cofactor is K(+).

It is found in the cytoplasm. The catalysed reaction is L-methionine + ATP + H2O = S-adenosyl-L-methionine + phosphate + diphosphate. Its pathway is amino-acid biosynthesis; S-adenosyl-L-methionine biosynthesis; S-adenosyl-L-methionine from L-methionine: step 1/1. Its function is as follows. Catalyzes the formation of S-adenosylmethionine (AdoMet) from methionine and ATP. The overall synthetic reaction is composed of two sequential steps, AdoMet formation and the subsequent tripolyphosphate hydrolysis which occurs prior to release of AdoMet from the enzyme. The chain is S-adenosylmethionine synthase from Aquifex aeolicus (strain VF5).